An 81-amino-acid chain; its full sequence is uncharacterized protein (81 aa).

Residues 1–58 form a disordered region; that stretch reads MPQSKQQFKRQGARQRDSKGKFVKARTGMATAPPAAVSTAAPTASTMTPTGSSTTATI. Low complexity predominate over residues 30 to 58; sequence ATAPPAAVSTAAPTASTMTPTGSSTTATI.

This is an uncharacterized protein from Caenorhabditis elegans.